A 623-amino-acid chain; its full sequence is Glutathione import ATP-binding protein GsiA (623 aa).

ABC transporter domains are found at residues Val-15–Leu-269 and Leu-325–Met-564. ATP-binding positions include Gly-49–Ser-56 and Gly-357–Ser-364.

Belongs to the ABC transporter superfamily. Glutathione importer (TC 3.A.1.5.11) family. The complex is composed of two ATP-binding proteins (GsiA), two transmembrane proteins (GsiC and GsiD) and a solute-binding protein (GsiB).

It localises to the cell inner membrane. It catalyses the reaction glutathione(out) + ATP + H2O = glutathione(in) + ADP + phosphate + H(+). Its function is as follows. Part of the ABC transporter complex GsiABCD involved in glutathione import. Responsible for energy coupling to the transport system. This Salmonella typhi protein is Glutathione import ATP-binding protein GsiA.